Consider the following 244-residue polypeptide: Phosphoadenosine 5'-phosphosulfate reductase (244 aa).

Cys-239 serves as the catalytic Nucleophile; cysteine thiosulfonate intermediate.

The protein belongs to the PAPS reductase family. CysH subfamily.

Its subcellular location is the cytoplasm. The enzyme catalyses [thioredoxin]-disulfide + sulfite + adenosine 3',5'-bisphosphate + 2 H(+) = [thioredoxin]-dithiol + 3'-phosphoadenylyl sulfate. Its pathway is sulfur metabolism; hydrogen sulfide biosynthesis; sulfite from sulfate: step 3/3. Catalyzes the formation of sulfite from phosphoadenosine 5'-phosphosulfate (PAPS) using thioredoxin as an electron donor. The protein is Phosphoadenosine 5'-phosphosulfate reductase of Klebsiella pneumoniae subsp. pneumoniae (strain ATCC 700721 / MGH 78578).